Consider the following 422-residue polypeptide: Hispidin-3-hydroxylase (422 aa).

Residues 6-26 traverse the membrane as a helical segment; it reads NSLSVLIVGAGLGGLAAAIAL. FAD-binding residues include Ala-50, Arg-108, and Asp-318.

This sequence belongs to the paxM FAD-dependent monooxygenase family. As to quaternary structure, monomer. The cofactor is FAD.

It is found in the membrane. It carries out the reaction hispidin + NADH + O2 + H(+) = 3-hydroxyhispidin + NAD(+) + H2O. The enzyme catalyses hispidin + NADPH + O2 + H(+) = 3-hydroxyhispidin + NADP(+) + H2O. It functions in the pathway secondary metabolite biosynthesis. Hispidin-3-hydroxylase; part of the gene cluster that mediates the fungal bioluminescence cycle. Hydroxylates hispidin in order to produce the fungal luciferin 3-hydroxyhispidin. The fungal bioluminescence cycle begins with the hispidin synthetase that catalyzes the formation of hispidin which is further hydroxylated by the hispidin-3-hydroxylase, yielding the fungal luciferin 3-hydroxyhispidin. The luciferase then produces an endoperoxide as a high-energy intermediate with decomposition that yields oxyluciferin (also known as caffeoylpyruvate) and light emission. Oxyluciferin can be recycled to caffeic acid by caffeoylpyruvate hydrolase. The sequence is that of Hispidin-3-hydroxylase from Neonothopanus nambi (Agaricus nambi).